Reading from the N-terminus, the 144-residue chain is Large ribosomal subunit protein uL15 (144 aa).

Positions 1-62 are disordered; it reads MELNNLKPAE…GQMPLQRRLP (62 aa). Over residues 21-31 the composition is skewed to gly residues; that stretch reads RGIGSGLGKTA.

This sequence belongs to the universal ribosomal protein uL15 family. Part of the 50S ribosomal subunit.

Functionally, binds to the 23S rRNA. The polypeptide is Large ribosomal subunit protein uL15 (Paraburkholderia phymatum (strain DSM 17167 / CIP 108236 / LMG 21445 / STM815) (Burkholderia phymatum)).